A 2703-amino-acid chain; its full sequence is Neurogenic locus Notch protein (2703 aa).

An N-terminal signal peptide occupies residues 1–52 (MQSQRSRRRSRAPNTWICFWINKMHAVASLPASLPLLLLTLAFANLPNTVRG). Residues 53–1745 (TDTALVAASC…NGEPPANVKY (1693 aa)) lie on the Extracellular side of the membrane. EGF-like domains lie at 58 to 95 (VAASCTSVGCQNGGTCVTQLNGKTYCACDSHYVGDYCE), 96 to 136 (HRNP…SLCE), 139 to 176 (VPNACDHVTCLNGGTCQLKTLEEYTCACANGYTGERCE), and 177 to 215 (TKNLCASSPCRNGATCTALAGSSSFTCSCPPGFTGDTCS). 24 cysteine pairs are disulfide-bonded: cysteine 62–cysteine 73, cysteine 67–cysteine 83, cysteine 85–cysteine 94, cysteine 100–cysteine 111, cysteine 105–cysteine 124, cysteine 126–cysteine 135, cysteine 143–cysteine 154, cysteine 148–cysteine 164, cysteine 166–cysteine 175, cysteine 181–cysteine 192, cysteine 186–cysteine 203, cysteine 205–cysteine 214, cysteine 221–cysteine 232, cysteine 226–cysteine 241, cysteine 243–cysteine 252, cysteine 259–cysteine 270, cysteine 264–cysteine 279, cysteine 281–cysteine 290, cysteine 297–cysteine 308, cysteine 302–cysteine 317, cysteine 319–cysteine 328, cysteine 335–cysteine 349, cysteine 343–cysteine 358, and cysteine 360–cysteine 369. The O-linked (Fuc...) threonine glycan is linked to threonine 72. The O-linked (Fuc...) threonine glycan is linked to threonine 110. Threonine 153 carries O-linked (Fuc...) threonine glycosylation. An O-linked (Glc...) serine glycan is attached at serine 183. An O-linked (Fuc...) threonine glycan is attached at threonine 191. O-linked (GlcNAc...) threonine glycosylation occurs at threonine 210. An EGF-like 5; calcium-binding domain is found at 217–253 (DIEECQSNPCKYGGTCVNTHGSYQCMCPTGYTGKDCD). Serine 223 carries O-linked (Glc...) serine glycosylation. Threonine 231 is a glycosylation site (O-linked (Fuc...) threonine). Positions 255–291 (KYKPCSPSPCQNGGICRSNGLSYECKCPKGFEGKNCE) constitute an EGF-like 6 domain. The EGF-like 7; calcium-binding domain maps to 293-329 (NYDDCLGHLCQNGGTCIDGISDYTCRCPPNFTGRFCQ). Residue threonine 307 is glycosylated (O-linked (Fuc...) threonine). Asparagine 322 carries an N-linked (GlcNAc...) asparagine glycan. An EGF-like 8; calcium-binding domain is found at 331–370 (DVDECAQRDHPVCQNGATCTNTHGSYSCICVNGWAGLDCS). Threonine 348 is a glycosylation site (O-linked (Fuc...) threonine). Asparagine 371 carries an N-linked (GlcNAc...) asparagine glycan. In terms of domain architecture, EGF-like 9; calcium-binding spans 372 to 408 (NTDDCKQAACFYGATCIDGVGSFYCQCTKGKTGLLCH). 8 cysteine pairs are disulfide-bonded: cysteine 376–cysteine 387, cysteine 381–cysteine 396, cysteine 398–cysteine 407, cysteine 413–cysteine 424, cysteine 418–cysteine 435, cysteine 437–cysteine 446, cysteine 453–cysteine 465, and cysteine 459–cysteine 474. Threonine 386 carries an O-linked (Fuc...) threonine glycan. One can recognise an EGF-like 10 domain in the interval 409–447 (LDDACTSNPCHADAICDTSPINGSYACSCATGYKGVDCS). Serine 427 carries an O-linked (Glc...) serine glycan. N-linked (GlcNAc...) asparagine glycosylation is present at asparagine 430. An EGF-like 11; calcium-binding domain is found at 449–486 (DIDECDQGSPCEHNGICVNTPGSYRCNCSQGFTGPRCE). N-linked (GlcNAc...) asparagine glycosylation is present at asparagine 475. 78 disulfides stabilise this stretch: cysteine 476/cysteine 485, cysteine 492/cysteine 503, cysteine 497/cysteine 512, cysteine 514/cysteine 523, cysteine 530/cysteine 541, cysteine 535/cysteine 550, cysteine 552/cysteine 561, cysteine 568/cysteine 579, cysteine 573/cysteine 588, cysteine 590/cysteine 599, cysteine 606/cysteine 616, cysteine 611/cysteine 625, cysteine 627/cysteine 636, cysteine 643/cysteine 654, cysteine 648/cysteine 663, cysteine 665/cysteine 674, cysteine 681/cysteine 692, cysteine 686/cysteine 701, cysteine 703/cysteine 712, cysteine 719/cysteine 730, cysteine 724/cysteine 739, cysteine 741/cysteine 750, cysteine 757/cysteine 768, cysteine 762/cysteine 777, cysteine 779/cysteine 788, cysteine 795/cysteine 806, cysteine 800/cysteine 815, cysteine 817/cysteine 826, cysteine 833/cysteine 844, cysteine 838/cysteine 853, cysteine 855/cysteine 864, cysteine 871/cysteine 882, cysteine 876/cysteine 893, cysteine 895/cysteine 904, cysteine 911/cysteine 923, cysteine 917/cysteine 932, cysteine 934/cysteine 943, cysteine 950/cysteine 961, cysteine 955/cysteine 970, cysteine 972/cysteine 981, cysteine 988/cysteine 999, cysteine 993/cysteine 1008, cysteine 1010/cysteine 1019, cysteine 1026/cysteine 1037, cysteine 1031/cysteine 1046, cysteine 1048/cysteine 1057, cysteine 1064/cysteine 1075, cysteine 1069/cysteine 1084, cysteine 1086/cysteine 1095, cysteine 1102/cysteine 1113, cysteine 1107/cysteine 1122, cysteine 1124/cysteine 1133, cysteine 1155/cysteine 1160, cysteine 1171/cysteine 1180, cysteine 1187/cysteine 1198, cysteine 1192/cysteine 1207, cysteine 1209/cysteine 1218, cysteine 1225/cysteine 1236, cysteine 1230/cysteine 1245, cysteine 1247/cysteine 1256, cysteine 1263/cysteine 1274, cysteine 1268/cysteine 1283, cysteine 1285/cysteine 1294, cysteine 1301/cysteine 1314, cysteine 1306/cysteine 1323, cysteine 1325/cysteine 1334, cysteine 1341/cysteine 1352, cysteine 1346/cysteine 1361, cysteine 1363/cysteine 1372, cysteine 1379/cysteine 1389, cysteine 1384/cysteine 1400, cysteine 1402/cysteine 1411, cysteine 1419/cysteine 1430, cysteine 1424/cysteine 1439, cysteine 1441/cysteine 1450, cysteine 1482/cysteine 1505, cysteine 1487/cysteine 1500, and cysteine 1496/cysteine 1512. Residue threonine 481 is glycosylated (O-linked (GlcNAc...) threonine). The 37-residue stretch at 488–524 (NINECESHPCQNEGSCLDDPGTFRCVCMPGFTGTQCE) folds into the EGF-like 12; calcium-binding domain. Serine 494 carries an O-linked (Glc...) serine glycan. An O-linked (Fuc...) serine glycan is attached at serine 502. Threonine 519 is a glycosylation site (O-linked (GlcNAc...) threonine). One can recognise an EGF-like 13; calcium-binding domain in the interval 526-562 (DIDECQSNPCLNDGTCHDKINGFKCSCALGFTGARCQ). A glycan (O-linked (Glc...) serine) is linked at serine 532. One can recognise an EGF-like 14; calcium-binding domain in the interval 564–600 (NIDDCQSQPCRNRGICHDSIAGYSCECPPGYTGTSCE). An O-linked (Glc...) serine glycan is attached at serine 570. Residue threonine 595 is glycosylated (O-linked (GlcNAc...) threonine). The 36-residue stretch at 602 to 637 (NINDCDSNPCHRGKCIDDVNSFKCLCDPGYTGYICQ) folds into the EGF-like 15; calcium-binding domain. A glycan (O-linked (Glc...) serine) is linked at serine 608. Positions 639–675 (QINECESNPCQFDGHCQDRVGSYYCQCQAGTSGKNCE) constitute an EGF-like 16; calcium-binding domain. The O-linked (Glc...) serine glycan is linked to serine 645. Positions 677–713 (NVNECHSNPCNNGATCIDGINSYKCQCVPGFTGQHCE) constitute an EGF-like 17; calcium-binding domain. Serine 683 is a glycosylation site (O-linked (Glc...) serine). Residue threonine 691 is glycosylated (O-linked (Fuc...) threonine). The EGF-like 18; calcium-binding domain occupies 715–751 (NVDECISSPCANNGVCIDQVNGYKCECPRGFYDAHCL). The O-linked (Glc...) serine glycan is linked to serine 721. The EGF-like 19; calcium-binding domain maps to 753 to 789 (DVDECASNPCVNEGRCEDGINEFICHCPPGYTGKRCE). O-linked (Glc...) serine glycosylation occurs at serine 759. One can recognise an EGF-like 20; calcium-binding domain in the interval 791–827 (DIDECSSNPCQHGGTCYDKLNAFSCQCMPGYTGQKCE). Serine 797 carries O-linked (Glc...) serine glycosylation. Threonine 805 carries O-linked (Fuc...) threonine glycosylation. Threonine 822 carries O-linked (GlcNAc...) threonine glycosylation. An EGF-like 21; calcium-binding domain is found at 829 to 865 (NIDDCVTNPCGNGGTCIDKVNGYKCVCKVPFTGRDCE). Threonine 843 carries O-linked (Fuc...) threonine glycosylation. The 39-residue stretch at 867-905 (KMDPCASNRCKNEAKCTPSSNFLDFSCTCKLGYTGRYCD) folds into the EGF-like 22 domain. One can recognise an EGF-like 23; calcium-binding domain in the interval 907–944 (DIDECSLSSPCRNGASCLNVPGSYRCLCTKGYEGRDCA). The O-linked (Fuc...) serine glycan is linked to serine 922. The 37-residue stretch at 946 to 982 (NTDDCASFPCQNGGTCLDGIGDYSCLCVDGFDGKHCE) folds into the EGF-like 24; calcium-binding domain. Serine 952 carries an O-linked (Glc...) serine glycan. An O-linked (Fuc...) threonine glycan is attached at threonine 960. The EGF-like 25 domain occupies 984–1020 (DINECLSQPCQNGATCSQYVNSYTCTCPLGFSGINCQ). Residue serine 990 is glycosylated (O-linked (Glc...) serine). A glycan (O-linked (Fuc...) threonine) is linked at threonine 998. Residues 1022 to 1058 (NDEDCTESSCLNGGSCIDGINGYNCSCLAGYSGANCQ) enclose the EGF-like 26; calcium-binding domain. Serine 1036 carries an O-linked (Fuc...) serine glycan. The N-linked (GlcNAc...) asparagine glycan is linked to asparagine 1045. EGF-like domains are found at residues 1060–1096 (KLNKCDSNPCLNGATCHEQNNEYTCHCPSGFTGKQCS), 1098–1134 (YVDWCGQSPCENGATCSQMKHQFSCKCSAGWTGKLCD), and 1136–1181 (QTIS…SYCQ). Serine 1066 carries O-linked (Glc...) serine glycosylation. Threonine 1074 carries O-linked (Fuc...) threonine glycosylation. Residue threonine 1112 is glycosylated (O-linked (Fuc...) threonine). Asparagine 1157 is a glycosylation site (N-linked (GlcNAc...) asparagine). Residues 1183–1219 (EIDECQSQPCQNGGTCRDLIGAYECQCRQGFQGQNCE) form the EGF-like 30; calcium-binding domain. O-linked (Glc...) serine glycosylation occurs at serine 1189. Threonine 1197 is a glycosylation site (O-linked (Fuc...) threonine). One can recognise an EGF-like 31; calcium-binding domain in the interval 1221 to 1257 (NIDDCAPNPCQNGGTCHDRVMNFSCSCPPGTMGIICE). O-linked (Fuc...) threonine glycosylation is present at threonine 1235. A glycan (N-linked (GlcNAc...) asparagine) is linked at asparagine 1242. One can recognise an EGF-like 32; calcium-binding domain in the interval 1259-1295 (NKDDCKPGACHNNGSCIDRVGGFECVCQPGFVGARCE). A glycan (N-linked (GlcNAc...) asparagine) is linked at asparagine 1271. Serine 1273 carries an O-linked (Fuc...) serine glycan. EGF-like domains follow at residues 1297–1335 (DINECLSNPCSNAGTLDCVQLVNNYHCNCRPGHMGRHCE), 1337–1373 (KVDFCAQSPCQNGGNCNIRQSGHHCICNNGFYGKNCE), 1375–1412 (SGQDCDSNPCRVGNCVVADEGFGYRCECPRGTLGEHCE), and 1415–1451 (TLDECSPNPCAQGAACEDLLGDYECLCPSKWKGKRCD). O-linked (Glc...) serine glycosylation is present at serine 1303. The O-linked (Glc...) serine glycan is linked to serine 1381. 3 LNR repeats span residues 1482-1521 (CDKRGCTEKQGNGICDSDCNTYACNFDGNDCSLGINPWAN), 1522-1557 (CTANECWNKFKNGKCNEECNNAACHYDGHDCERKLK), and 1559-1599 (CDSL…TQSP). The N-linked (GlcNAc...) asparagine glycan is linked to asparagine 1521. Intrachain disulfides connect cysteine 1522-cysteine 1545, cysteine 1527-cysteine 1540, cysteine 1536-cysteine 1552, cysteine 1559-cysteine 1585, cysteine 1567-cysteine 1580, and cysteine 1576-cysteine 1592. Residues asparagine 1594 and asparagine 1627 are each glycosylated (N-linked (GlcNAc...) asparagine). Residues 1746–1766 (VITGIILVIIALAFFGMVLST) form a helical membrane-spanning segment. At 1767–2703 (QRKRAHGVTW…ANKGSEAIYI (937 aa)) the chain is on the cytoplasmic side. Residues 1810 to 1850 (QSQGVGQPGAHWSDDESDMPLPKRQRSDPVSGVGLGNNGGY) are disordered. ANK repeat units lie at residues 1901-1945 (CGLT…ELNA), 1950-1979 (TGETSLHLAARFARADAAKRLLDAGADANC), 1983-2013 (TGRTPLHAAVAADAMGVFQILLRNRATNLNA), 2017-2046 (DGTTPLILAARLAIEGMVEDLITADADINA), 2050-2079 (SGKTALHWAAAVNNTEAVNILLMHHANRDA), 2083-2112 (KDETPLFLAAREGSYEACKALLDNFANREI), and 2116-2139 (MDRLPRDVASERLHHDIVRLLDEH). Residues 2172 to 2257 (TVISAGNGGN…LTGGVSGVPG (86 aa)) form a disordered region. Over residues 2228-2238 (KKTSAASKKAA) the composition is skewed to low complexity. The tract at residues 2325–2328 (PPSY) is interaction with Nedd4. Disordered stretches follow at residues 2399-2452 (SGAG…PTSP), 2488-2524 (GGGGGGGVGQGPQNSPVSLGIISPTGSDMGIMLAPPQ), 2579-2620 (LDLN…PSSQ), and 2632-2703 (PSSQ…AIYI). The segment covering 2414 to 2429 (PYSNQSPPHSVQSSLA) has biased composition (polar residues). Serine 2447 carries the post-translational modification Phosphoserine. The span at 2488–2497 (GGGGGGGVGQ) shows a compositional bias: gly residues. A compositionally biased stretch (low complexity) spans 2598–2619 (PPSIQSSMSGSSPSTNMLSPSS). The span at 2632-2653 (PSSQHSGGHTPQHLVQTLDSYP) shows a compositional bias: polar residues. Over residues 2659-2675 (SPGHWSSSSPRSNSDWS) the composition is skewed to low complexity. A compositionally biased stretch (polar residues) spans 2677–2687 (GVQSPAANNLY).

It belongs to the NOTCH family. Homomer. Interacts with Su(H) when activated. Interacts with Dx via its ANK repeats. Interacts with Delta via the EGF repeats and the Delta EGF repeats. Interacts with Nedd4 and Su(dx). Interacts with O-fut1; the interaction glycosylates N and transports N to early endosomes. Interacts with Akap200; the interaction stabilizes N/Notch protein levels by preventing Cbl-mediated ubiquitination and subsequent lysosomal degradation of N/Notch. Post-translationally, upon binding its ligands such as Delta or Serrate, it is cleaved (S2 cleavage) in its extracellular domain, close to the transmembrane domain. S2 cleavage is probably mediated by Kuz. It is then cleaved (S3 cleavage) downstream of its transmembrane domain, releasing it from the cell membrane. S3 cleavage requires Psn. In terms of processing, O-glycosylated. Three forms of O-glycosylation (O-fucosylation, O-glucosylation and O-GlcNAcylation) are detected. O-fucosylated by O-fut1 and fng in the EGF repeat domain inhibits both Serrate/Ser- and Delta/Dl-binding. O-glucosylation by rumi in the endoplasmic reticulum is necessary for correct folding and signaling. Ubiquitinated by various ubiquitin ligases; which promotes ligand-independent endocytosis and proteasomal degradation. Ubiquitinated by Nedd4. May also be ubiquitinated by Su(dx) and Cbl. Mono-ubiquitinated, possibly by dx/deltex; this may be involved in the ESCRT-III mediated targeting to multivesicular bodies.

The protein resides in the cell membrane. The protein localises to the endosome. Its subcellular location is the multivesicular body. It localises to the nucleus. Functionally, essential signaling protein which has a major role in many developmental processes. Functions as a receptor for membrane-bound ligands Delta and Serrate to regulate cell-fate determination. Upon ligand activation, and releasing from the cell membrane, the Notch intracellular domain (NICD) forms a transcriptional activator complex with Su(H) (Suppressor of hairless) and activates genes of the E(spl) complex. Regulates oogenesis, the differentiation of the ectoderm and the development of the central and peripheral nervous system, eye, wing disk, muscles and segmental appendages such as antennae and legs, through lateral inhibition or induction. Regulates neuroblast self-renewal, identity and proliferation through the regulation of bHLH-O proteins; in larval brains, involved in the maintenance of type II neuroblast self-renewal and identity by suppressing erm expression together with pnt; might also regulate dpn expression through the activation of the transcriptional regulator Su(H). Targeted for ESCRT-mediated endosomal sequestration and lysosomal degradation by various E3 ubiquitin ligases to regulate the Notch signaling pathway. Can undergo ligand-dependent and non-canonical ligand-independent activation. Ligand-independent activation is dependent on endosome acidification and probably occurs in late endosomes or lysosome. Ectopic ligand-independent activation occurs when disruption of the endolysosomal pathway, particularly of the ESCRT-III complex, prevents sequestration of the receptor in intraluminal vesicles of multivesicular bodies. The protein is Neurogenic locus Notch protein of Drosophila melanogaster (Fruit fly).